The chain runs to 115 residues: T cell receptor beta variable 7-6 (115 aa).

A signal peptide spans 1–21 (MGTSLLCWVVLGFLGTDHTGA). An Ig-like domain is found at 22–115 (GVSQSPRYKV…SAMYRCASSL (94 aa)). A disulfide bridge connects residues C42 and C111.

Alpha-beta TR is a heterodimer composed of an alpha and beta chain; disulfide-linked. The alpha-beta TR is associated with the transmembrane signaling CD3 coreceptor proteins to form the TR-CD3 (TcR or TCR). The assembly of alpha-beta TR heterodimers with CD3 occurs in the endoplasmic reticulum where a single alpha-beta TR heterodimer associates with one CD3D-CD3E heterodimer, one CD3G-CD3E heterodimer and one CD247 homodimer forming a stable octameric structure. CD3D-CD3E and CD3G-CD3E heterodimers preferentially associate with TR alpha and TR beta chains, respectively. The association of the CD247 homodimer is the last step of TcR assembly in the endoplasmic reticulum and is required for transport to the cell surface.

It localises to the cell membrane. Functionally, v region of the variable domain of T cell receptor (TR) beta chain that participates in the antigen recognition. Alpha-beta T cell receptors are antigen specific receptors which are essential to the immune response and are present on the cell surface of T lymphocytes. Recognize peptide-major histocompatibility (MH) (pMH) complexes that are displayed by antigen presenting cells (APC), a prerequisite for efficient T cell adaptive immunity against pathogens. Binding of alpha-beta TR to pMH complex initiates TR-CD3 clustering on the cell surface and intracellular activation of LCK that phosphorylates the ITAM motifs of CD3G, CD3D, CD3E and CD247 enabling the recruitment of ZAP70. In turn ZAP70 phosphorylates LAT, which recruits numerous signaling molecules to form the LAT signalosome. The LAT signalosome propagates signal branching to three major signaling pathways, the calcium, the mitogen-activated protein kinase (MAPK) kinase and the nuclear factor NF-kappa-B (NF-kB) pathways, leading to the mobilization of transcription factors that are critical for gene expression and essential for T cell growth and differentiation. The T cell repertoire is generated in the thymus, by V-(D)-J rearrangement. This repertoire is then shaped by intrathymic selection events to generate a peripheral T cell pool of self-MH restricted, non-autoaggressive T cells. Post-thymic interaction of alpha-beta TR with the pMH complexes shapes TR structural and functional avidity. The protein is T cell receptor beta variable 7-6 of Homo sapiens (Human).